Here is a 340-residue protein sequence, read N- to C-terminus: Guanine nucleotide-binding protein subunit beta-1 (340 aa).

Ser29 carries the post-translational modification Phosphoserine. WD repeat units follow at residues 53–92 (GHLA…KVHA), 95–134 (LRSS…GNVR), 141–179 (GHGG…QVTS), 182–221 (GHTG…CKQT), 224–263 (GHES…ELAM), 268–307 (NIIC…RSGI), and 310–340 (GHDN…RVWN).

This sequence belongs to the WD repeat G protein beta family. In terms of assembly, g proteins are composed of 3 units, alpha, beta and gamma. In terms of tissue distribution, expressed in the brain neuropil and cortex, and the thoracic ganglion (at protein level). Expression detected in eye at protein level but not at mRNA level, suggesting cross reactivity of antibodies to the similar Gbeta76C protein.

In terms of biological role, guanine nucleotide-binding proteins (G proteins) are involved as a modulator or transducer in various transmembrane signaling systems. The beta and gamma chains are required for the GTPase activity, for replacement of GDP by GTP, and for G protein-effector interaction. This chain is Guanine nucleotide-binding protein subunit beta-1 (Gbeta13F), found in Drosophila melanogaster (Fruit fly).